A 363-amino-acid chain; its full sequence is Phosphoribosylformylglycinamidine cyclo-ligase (363 aa).

This sequence belongs to the AIR synthase family.

The protein localises to the cytoplasm. The catalysed reaction is 2-formamido-N(1)-(5-O-phospho-beta-D-ribosyl)acetamidine + ATP = 5-amino-1-(5-phospho-beta-D-ribosyl)imidazole + ADP + phosphate + H(+). It participates in purine metabolism; IMP biosynthesis via de novo pathway; 5-amino-1-(5-phospho-D-ribosyl)imidazole from N(2)-formyl-N(1)-(5-phospho-D-ribosyl)glycinamide: step 2/2. The sequence is that of Phosphoribosylformylglycinamidine cyclo-ligase from Parvibaculum lavamentivorans (strain DS-1 / DSM 13023 / NCIMB 13966).